The chain runs to 219 residues: Probable GTP-binding protein EngB (219 aa).

The EngB-type G domain occupies 24 to 207 (VQPEIAFAGR…HELIESWVRP (184 aa)). GTP is bound by residues 32–39 (GRSNAGKS), 59–63 (GRTQH), 81–84 (DLPG), 148–151 (TKCD), and 186–188 (FSA). The Mg(2+) site is built by serine 39 and threonine 61.

It belongs to the TRAFAC class TrmE-Era-EngA-EngB-Septin-like GTPase superfamily. EngB GTPase family. Mg(2+) is required as a cofactor.

Necessary for normal cell division and for the maintenance of normal septation. This Burkholderia ambifaria (strain MC40-6) protein is Probable GTP-binding protein EngB.